A 504-amino-acid polypeptide reads, in one-letter code: Probable cytosol aminopeptidase (504 aa).

Residues lysine 274 and aspartate 279 each coordinate Mn(2+). Residue lysine 286 is part of the active site. 3 residues coordinate Mn(2+): aspartate 297, aspartate 356, and glutamate 358. Residue arginine 360 is part of the active site.

Belongs to the peptidase M17 family. It depends on Mn(2+) as a cofactor.

The protein resides in the cytoplasm. It catalyses the reaction Release of an N-terminal amino acid, Xaa-|-Yaa-, in which Xaa is preferably Leu, but may be other amino acids including Pro although not Arg or Lys, and Yaa may be Pro. Amino acid amides and methyl esters are also readily hydrolyzed, but rates on arylamides are exceedingly low.. The enzyme catalyses Release of an N-terminal amino acid, preferentially leucine, but not glutamic or aspartic acids.. Its function is as follows. Presumably involved in the processing and regular turnover of intracellular proteins. Catalyzes the removal of unsubstituted N-terminal amino acids from various peptides. The sequence is that of Probable cytosol aminopeptidase from Blochmanniella floridana.